Reading from the N-terminus, the 516-residue chain is Calcitonin receptor (516 aa).

An N-terminal signal peptide occupies residues 1-24 (MRFLLLNRFTLLLLLLVSPTPVLQ). Residues 25–146 (APTNLTDSGL…FTPDKLHNAY (122 aa)) lie on the Extracellular side of the membrane. N28, N73, N125, and N130 each carry an N-linked (GlcNAc...) asparagine glycan. 3 disulfide bridges follow: C55–C81, C72–C112, and C95–C134. Residues 147–169 (VLYYLALVGHSMSIAALIASMGI) form a helical membrane-spanning segment. The Cytoplasmic segment spans residues 170-181 (FLFFKNLSCQRV). A helical transmembrane segment spans residues 182–202 (TLHKNMFLTYILNSIIIIIHL). Topologically, residues 203–256 (VEVVPNGDLVRRDPMHIFHHNTYMWTMQWELSPPLPLSAHEGKMDPHDSEVISC) are extracellular. C256 and C326 are joined by a disulfide. A helical membrane pass occupies residues 257 to 279 (KILHFFHQYMMACNYFWMLCEGI). The Cytoplasmic segment spans residues 280–296 (YLHTLIVMAVFTEDQRL). A helical membrane pass occupies residues 297–317 (RWYYLLGWGFPIVPTIIHAIT). At 318–333 (RAVYYNDNCWLSTETH) the chain is on the extracellular side. The helical transmembrane segment at 334–357 (LLYIIHGPVMAALVVNFFFLLNIV) threads the bilayer. Residues 358 to 377 (RVLVTKMRQTHEAEAYMYLK) lie on the Cytoplasmic side of the membrane. A helical transmembrane segment spans residues 378 to 396 (AVKATMVLVPLLGIQFVVF). Over 397–404 (PWRPSNKV) the chain is Extracellular. The helical transmembrane segment at 405–431 (LGKIYDYLMHSLIHFQGFFVATIYCFC) threads the bilayer. The Cytoplasmic segment spans residues 432–516 (NHEVQVTLKR…MNVIQQDSSA (85 aa)). Residues 489-516 (RNPPVSNNEGEEGTEMIPMNVIQQDSSA) form a disordered region.

This sequence belongs to the G-protein coupled receptor 2 family. Heterodimer of CALCR and RAMP1, RAMP2 or RAMP3; the receptor complexes function as AMYR1, AMYR2 and AMYR3 receptors, respectively, and respond to amylin/IAPP, calcitonin/CT and CGRP1 ligands. Interacts with GPRASP2.

Its subcellular location is the cell membrane. Its function is as follows. G protein-coupled receptor activated by ligand peptides amylin (IAPP), calcitonin (CT/CALCA) and calcitonin gene-related peptide type 1 (CGRP1/CALCA). CALCR interacts with receptor-activity-modifying proteins RAMP1, 2 and 3 to form receptor complexes AMYR1, 2 and 3, respectively. IAPP, CT and CGRP1 activate CALCR and AMYRs with distinct modes of receptor activation resulting in specific phenotypes. Ligand binding causes a conformation change that triggers signaling via guanine nucleotide-binding proteins (G proteins) and modulates the activity of downstream effectors. Activates cAMP-dependent pathway. The chain is Calcitonin receptor from Rattus norvegicus (Rat).